The primary structure comprises 49 residues: Large ribosomal subunit protein bL33B (49 aa).

Belongs to the bacterial ribosomal protein bL33 family.

The sequence is that of Large ribosomal subunit protein bL33B from Acholeplasma laidlawii (strain PG-8A).